A 511-amino-acid polypeptide reads, in one-letter code: MSTEETVDEVPCCGSHDEAQCTIQHDLAPQPLIVEEEVNNGEKKAKIAVVGCSHGEMDAIYETMALIEEKKGYKFDLLICCGDYQAVRNHGDLPHMSIPPKYRSLQTFYKYYSGEKKAPVLTLFIGGNHEASGFLCELPNGGWVAPNIFYMGFANCIQFAGLRIAGLSGIYSHGDVEFSHYERPAFAERDVKSAYHVRNVDMFRLRQLKAANNDKLSNPIDIMLSHDWPGGIPDFGDSAWLFKKKDLFEADHKSGKLGNPALMKLIYDCRPRYYLAAHLHIKFAALVPHKGSGSERPQPTRFLSLDKPIPGRQFMQALEINVASDAKMELSYDPEWLAILKNTDLLTTADKTKIVLPDRIGSVPCVYDRKDFRPTAEEMEEITKLGDLTIKTDTFKHTAPPLKEDTSEAKNVPPSAYYRNPQSAEFCQWLGIKDLNYLLVEKSSDYVGIPFYMMPDSGETEFKSNQDEVDFGEDDFIIDRGHGSEEPEAKKSRLEEEKKKKKKKIENLKTL.

Cys52, His54, Asp83, and Asn128 together coordinate a divalent metal cation. Positions 168-198 (SGIYSHGDVEFSHYERPAFAERDVKSAYHVR) are lariat recognition loop. A divalent metal cation-binding residues include His226, His278, and His280. The interval 473–511 (EDDFIIDRGHGSEEPEAKKSRLEEEKKKKKKKIENLKTL) is disordered. Positions 477–498 (IIDRGHGSEEPEAKKSRLEEEK) are enriched in basic and acidic residues.

It belongs to the lariat debranching enzyme family. Requires Fe(2+) as cofactor. Zn(2+) is required as a cofactor. The cofactor is Mn(2+).

Its subcellular location is the nucleus. Active in presence of diverse metals including Fe(2+), Zn(2+), Mn(2+). Binds two metal cations in two adjacent alpha and beta metal-binding pockets. Functionally, cleaves the 2'-5' phosphodiester linkage at the branch point of lariat intron pre-mRNAs after splicing and converts them into linear molecules that are subsequently degraded. It thereby facilitates ribonucleotide turnover. This Caenorhabditis briggsae protein is Lariat debranching enzyme (dbr-1).